A 154-amino-acid chain; its full sequence is Interleukin-7 (154 aa).

Positions 1–25 are cleaved as a signal peptide; it reads MFHVSFRYIFGIPPLILVLLPVTSS. 3 disulfides stabilise this stretch: Cys27-Cys145, Cys58-Cys133, and Cys71-Cys116. N-linked (GlcNAc...) asparagine glycans are attached at residues Asn94 and Asn115.

The protein belongs to the IL-7/IL-9 family. As to quaternary structure, interacts with IL7R and CSF2RG. Three disulfide bonds are present.

The protein localises to the secreted. Hematopoietic cytokine that plays an essential role in the development, expansion, and survival of naive and memory T-cells and B-cells thereby regulating the number of mature lymphocytes and maintaining lymphoid homeostasis. Mechanistically, exerts its biological effects through a receptor composed of IL7RA subunit and the cytokine receptor common subunit gamma/CSF2RG. Binding to the receptor leads to activation of various kinases including JAK1 or JAK3 depending on the cell type and subsequently propagation of signals through activation of several downstream signaling pathways including the PI3K/Akt/mTOR or the JAK-STAT5. The polypeptide is Interleukin-7 (Il7) (Rattus norvegicus (Rat)).